Here is a 189-residue protein sequence, read N- to C-terminus: Thioredoxin-like protein CITRX, chloroplastic (189 aa).

The transit peptide at Met1–Arg56 directs the protein to the chloroplast. Positions Gly72 to Leu189 constitute a Thioredoxin domain. Catalysis depends on nucleophile residues Cys112 and Cys115. Cys112 and Cys115 form a disulfide bridge.

Belongs to the thioredoxin family. Plant CITRX-type subfamily.

It localises to the plastid. Its subcellular location is the chloroplast. Functionally, probable thiol-disulfide oxidoreductase that may play a role in proper chloroplast development. In Oryza sativa subsp. japonica (Rice), this protein is Thioredoxin-like protein CITRX, chloroplastic.